The following is a 248-amino-acid chain: Small ribosomal subunit protein uS2 (248 aa).

The protein belongs to the universal ribosomal protein uS2 family.

The chain is Small ribosomal subunit protein uS2 from Thiobacillus denitrificans (strain ATCC 25259 / T1).